The chain runs to 62 residues: Photosystem II reaction center protein Z (62 aa).

2 consecutive transmembrane segments (helical) span residues alanine 8–alanine 28 and phenylalanine 41–isoleucine 61.

The protein belongs to the PsbZ family. In terms of assembly, PSII is composed of 1 copy each of membrane proteins PsbA, PsbB, PsbC, PsbD, PsbE, PsbF, PsbH, PsbI, PsbJ, PsbK, PsbL, PsbM, PsbT, PsbY, PsbZ, Psb30/Ycf12, at least 3 peripheral proteins of the oxygen-evolving complex and a large number of cofactors. It forms dimeric complexes.

The protein localises to the plastid. Its subcellular location is the chloroplast thylakoid membrane. May control the interaction of photosystem II (PSII) cores with the light-harvesting antenna, regulates electron flow through the 2 photosystem reaction centers. PSII is a light-driven water plastoquinone oxidoreductase, using light energy to abstract electrons from H(2)O, generating a proton gradient subsequently used for ATP formation. This Hordeum vulgare (Barley) protein is Photosystem II reaction center protein Z.